Consider the following 102-residue polypeptide: Large ribosomal subunit protein bL21 (102 aa).

It belongs to the bacterial ribosomal protein bL21 family. Part of the 50S ribosomal subunit. Contacts protein L20.

This protein binds to 23S rRNA in the presence of protein L20. This Trichlorobacter lovleyi (strain ATCC BAA-1151 / DSM 17278 / SZ) (Geobacter lovleyi) protein is Large ribosomal subunit protein bL21.